We begin with the raw amino-acid sequence, 428 residues long: Gamma-glutamyl phosphate reductase (428 aa).

The protein belongs to the gamma-glutamyl phosphate reductase family.

Its subcellular location is the cytoplasm. The catalysed reaction is L-glutamate 5-semialdehyde + phosphate + NADP(+) = L-glutamyl 5-phosphate + NADPH + H(+). Its pathway is amino-acid biosynthesis; L-proline biosynthesis; L-glutamate 5-semialdehyde from L-glutamate: step 2/2. Its function is as follows. Catalyzes the NADPH-dependent reduction of L-glutamate 5-phosphate into L-glutamate 5-semialdehyde and phosphate. The product spontaneously undergoes cyclization to form 1-pyrroline-5-carboxylate. The chain is Gamma-glutamyl phosphate reductase from Chromohalobacter salexigens (strain ATCC BAA-138 / DSM 3043 / CIP 106854 / NCIMB 13768 / 1H11).